A 378-amino-acid polypeptide reads, in one-letter code: MKHNTLRAVFQFSFFIGICTFIMIAGYSYQINYNQRMGIFYGGNITFKKVPKVVIYTATPFFDVPIENSILRDCSEKIKNSCTVTSNNKTFPIADAIVFHSRDINETKLSFFNKNRRYDIPYIMMAMENPFFAGLTVYHNFFNWTMTYRTDSDIFHPYGAFVKSYVPAEVNYSEIWNSKTKETLWMVSNGNAQNKRKELVEKLIKKGMSIDLYGQLYKKEPAECPRRRGPPGCDVKFHSPYKFAIAFENSNCKDYVTEKFWKKAGIYKTVPIVMSRKIYRDLGIPDSMYIAVDDYPNLEEFVHHIQNVTSNEEEYMKYHKWRKQFKIVDTNEGNIGFCQLCQKLAGYKRKLVPHKVYENLNSWHSTSTCDNSFATRFL.

At 1 to 7 the chain is on the cytoplasmic side; that stretch reads MKHNTLR. A helical; Signal-anchor for type II membrane protein membrane pass occupies residues 8 to 28; the sequence is AVFQFSFFIGICTFIMIAGYS. Residues 29–378 lie on the Lumenal side of the membrane; the sequence is YQINYNQRMG…CDNSFATRFL (350 aa). Residues Asn44, Asn88, Asn105, Asn143, Asn171, and Asn307 are each glycosylated (N-linked (GlcNAc...) asparagine).

It belongs to the glycosyltransferase 10 family. The cofactor is Ca(2+). In terms of processing, N-glycosylated.

Its subcellular location is the golgi apparatus. It is found in the golgi stack membrane. It catalyses the reaction a beta-D-galactosyl-(1-&gt;3)-N-acetyl-beta-D-glucosaminyl derivative + GDP-beta-L-fucose = a beta-D-galactosyl-(1-&gt;3)-[alpha-L-fucosyl-(1-&gt;4)]-N-acetyl-beta-D-glucosaminyl derivative + GDP + H(+). The protein operates within protein modification; protein glycosylation. Inhibited by Cu(2+) and Ni(2+), and to a lesser extent by EDTA, Mn(2+) and Mg(2+). In terms of biological role, catalyzes the addition of fucose in alpha 1-3 linkage to GalNAc-beta-1-&gt;4-GlcNAc-beta-1-&gt;3-Gal-beta-1-&gt;4-Glc (LDNT)acceptor. Unlike fut-1, does not add fucose to Man-alpha-1-&gt;3-(Man-alpha-1-&gt;6)-Man-beta-1-&gt;4-GlcNAc-beta-1-&gt;4-GlcNAc-beta-1-Asn (M3), Man-alpha-1-&gt;3-(Man-alpha-1-&gt;6)-Man-beta-1-&gt;4-GlcNAc-beta-1-&gt;4-(Fuc-alpha-1-&gt;6)-GlcNAc-beta-1-Asn (M3F6) or GlcNAc-beta-1-&gt;2-Man-alpha-1-&gt;3-(GlcNAc-beta-1-&gt;2-Man-alpha-1-&gt;6)-Man-beta-1-4-GlcNAc-beta-1-&gt;4-(Fuc-alpha-1-&gt;6)-GlcNAc-beta-1-Asn (GnM3F6) acceptors. In Caenorhabditis elegans, this protein is Alpha-(1,3)-fucosyltransferase fut-5.